Consider the following 160-residue polypeptide: Protein-export protein SecB (160 aa).

It belongs to the SecB family. Homotetramer, a dimer of dimers. One homotetramer interacts with 1 SecA dimer.

The protein resides in the cytoplasm. One of the proteins required for the normal export of preproteins out of the cell cytoplasm. It is a molecular chaperone that binds to a subset of precursor proteins, maintaining them in a translocation-competent state. It also specifically binds to its receptor SecA. The protein is Protein-export protein SecB of Burkholderia multivorans (strain ATCC 17616 / 249).